Reading from the N-terminus, the 671-residue chain is Synaptotagmin-like protein 4 (671 aa).

One can recognise a RabBD domain in the interval 4 to 122; the sequence is LLDLSFLSEE…KATGDWFYDQ (119 aa). An FYVE-type zinc finger spans residues 63 to 105; sequence CARCQESLGRLSPKTNTCRGCNHLVCRDCRIQESNGTWRCKVC. The disordered stretch occupies residues 199–243; sequence SESLDSFTADSDSTSRRDSLDKSGLFPEWKKMSAPKSQVEKETQP. Residues serine 201, serine 204, serine 217, serine 221, serine 274, and serine 289 each carry the phosphoserine modification. The region spanning 356–478 is the C2 1 domain; the sequence is VTGRIAFSLK…KLDKKLDHCL (123 aa). Residue serine 488 is modified to Phosphoserine. The 127-residue stretch at 507-633 folds into the C2 2 domain; the sequence is PASKTPVGGD…ISNGEVVDWM (127 aa).

As to quaternary structure, part of a ternary complex containing STX1A and RAB27A. Can bind both dominant negative and dominant active mutants of RAB27A. Binds STXBP1, RAB3A, RAB8A and RAB27B. Interacts with MYO5A.

The protein resides in the membrane. Its subcellular location is the cell membrane. It localises to the cytoplasmic vesicle. It is found in the secretory vesicle membrane. In terms of biological role, modulates exocytosis of dense-core granules and secretion of hormones in the pancreas and the pituitary. Interacts with vesicles containing negatively charged phospholipids in a Ca(2+)-independent manner. The sequence is that of Synaptotagmin-like protein 4 (SYTL4) from Homo sapiens (Human).